A 394-amino-acid polypeptide reads, in one-letter code: 1-deoxy-D-xylulose 5-phosphate reductoisomerase (394 aa).

Residues threonine 13, glycine 14, serine 15, isoleucine 16, and asparagine 127 each contribute to the NADPH site. Lysine 128 is a binding site for 1-deoxy-D-xylulose 5-phosphate. Glutamate 129 is a binding site for NADPH. Aspartate 153 serves as a coordination point for Mn(2+). 4 residues coordinate 1-deoxy-D-xylulose 5-phosphate: serine 154, glutamate 155, serine 184, and histidine 207. Position 155 (glutamate 155) interacts with Mn(2+). Residue glycine 213 coordinates NADPH. Residues serine 220, asparagine 225, lysine 226, and glutamate 229 each contribute to the 1-deoxy-D-xylulose 5-phosphate site. Residue glutamate 229 participates in Mn(2+) binding.

It belongs to the DXR family. The cofactor is Mg(2+). Requires Mn(2+) as cofactor.

It carries out the reaction 2-C-methyl-D-erythritol 4-phosphate + NADP(+) = 1-deoxy-D-xylulose 5-phosphate + NADPH + H(+). Its pathway is isoprenoid biosynthesis; isopentenyl diphosphate biosynthesis via DXP pathway; isopentenyl diphosphate from 1-deoxy-D-xylulose 5-phosphate: step 1/6. In terms of biological role, catalyzes the NADPH-dependent rearrangement and reduction of 1-deoxy-D-xylulose-5-phosphate (DXP) to 2-C-methyl-D-erythritol 4-phosphate (MEP). This Ectopseudomonas mendocina (strain ymp) (Pseudomonas mendocina) protein is 1-deoxy-D-xylulose 5-phosphate reductoisomerase.